Consider the following 979-residue polypeptide: Receptor-type tyrosine-protein phosphatase-like N (979 aa).

Positions 1–37 (MRRPRRPGGSGGSGGSGGLRLLVCLLLLSGRPGGCSA) are cleaved as a signal peptide. Residues 38-134 (ISAHGCLFDR…HPRDRSGLVP (97 aa)) form an RESP18 homology domain region. Topologically, residues 38 to 575 (ISAHGCLFDR…RQAHGISPMR (538 aa)) are lumenal. Cysteines 56 and 65 form a disulfide. Residues 113 to 130 (MERIPRLRPPEPHPRDRS) show a composition bias toward basic and acidic residues. Disordered regions lie at residues 113-173 (MERI…GSPL), 289-330 (GRAR…AAQP), and 392-443 (MQRG…SSSV). Over residues 145–155 (TQGNPTGSSPA) the composition is skewed to polar residues. The span at 303–322 (RAEDSSEGHEEEVLGGRGEK) shows a compositional bias: basic and acidic residues. Phosphoserine is present on residues S307 and S308. Polar residues predominate over residues 414–424 (SPASSEVQQVL). The tract at residues 449-575 (SPLGQSQPTV…RQAHGISPMR (127 aa)) is sufficient for dimerization of proICA512. N506 and N524 each carry an N-linked (GlcNAc...) asparagine glycan. Residues 576-600 (SVLLTLVALAGVAGLLVALAVALCM) traverse the membrane as a helical segment. A sufficient for dimerization of proICA512 region spans residues 601-732 (RHHSRQRDKE…PNTCAAAQDE (132 aa)). Over 601–979 (RHHSRQRDKE…VNAILKALPQ (379 aa)) the chain is Cytoplasmic. The segment at 644-680 (RAEGQPEPSRVSSVSSQFSDAAQASPSSHSSTPSWCE) is disordered. The span at 648-677 (QPEPSRVSSVSSQFSDAAQASPSSHSSTPS) shows a compositional bias: low complexity. Residues 709–969 (LAKEWQALCA…EFALTAVAEE (261 aa)) form the Tyrosine-protein phosphatase domain. K754 participates in a covalent cross-link: Glycyl lysine isopeptide (Lys-Gly) (interchain with G-Cter in SUMO).

It belongs to the protein-tyrosine phosphatase family. Receptor class 8 subfamily. As to quaternary structure, homodimer; shown for the unprocessed protein (proICA512) in the endoplasmic reticulum and resolved during protein maturation as ICA512-TMF seems to be predominantly monomeric in secretory granules; however, ICA512-CCF interacts with ICA512-TMF disrupting the ICA512-TMF:SNTB2 complex. The isolated lumenal RESP18 homology domain has been shown to form disulfide-linked homooligomers. Interacts (via cytoplasmic domain) with phosphorylated SNTB2; this protects PTPRN against cleavage by CAPN1 to produce ICA512-CCF. Dephosphorylation of SNTB2 upon insulin stimulation disrupts the interaction and results in PTPRN cleavage. Interacts with SNX19. ICA512-CCF interacts with PIAS4; in the nucleus. Interacts with STAT5B (phosphorylated); down-regulated by ICA512-CCF sumoylation; ICA512-CCF prevents STAT5B dephosphorylation; ICA512-CCF mediates interaction of STAT5B with PIAS4. Interacts (via RESP18 homology domain) with insulin and proinsulin. Interacts with PTPRN2, PTPRA and PTPRE. Subject to proteolytic cleavage at multiple sites. Subject to cleavage on a pair of basic residues. On exocytosis of secretory granules in pancreatic beta-cells ICA512-TMF is transiently inserted in the plasma-membrane and cleaved by mu-type calpain CPN1 to yield ICA512-CCF. In terms of processing, O-glycosylated. Post-translationally, N-glycosylated. Sumoylated at two sites including Lys-754. Sumoylation decreases interaction with STAT5. As to expression, detected in pituitary. Detected in brain (at protein level). Detected in brain. Weakly expressed in the colon, intestine, stomach and pancreas.

Its subcellular location is the membrane. It is found in the cytoplasmic vesicle. It localises to the secretory vesicle membrane. The protein resides in the perikaryon. The protein localises to the cell projection. Its subcellular location is the axon. It is found in the synapse. It localises to the cell membrane. The protein resides in the endosome. The protein localises to the nucleus. Functionally, plays a role in vesicle-mediated secretory processes. Required for normal accumulation of secretory vesicles in hippocampus, pituitary and pancreatic islets. Required for the accumulation of normal levels of insulin-containing vesicles and preventing their degradation. Plays a role in insulin secretion in response to glucose stimuli. Required for normal accumulation of the neurotransmitters norepinephrine, dopamine and serotonin in the brain. In females, but not in males, required for normal accumulation and secretion of pituitary hormones, such as luteinizing hormone (LH) and follicle-stimulating hormone (FSH). Seems to lack intrinsic enzyme activity. Required to maintain normal levels of renin expression and renin release. May regulate catalytic active protein-tyrosine phosphatases such as PTPRA through dimerization. Its function is as follows. ICA512-TMF regulates dynamics and exocytosis of insulin secretory granules (SGs); binding of ICA512-TMF to SNTB2/beta-2-syntrophin is proposed to restrain SGs mobility and exocytosis by tethering them to the actin cytoskeleton depending on UTRN; the function is inhibited by cytoplasmic ICA512-CFF dimerizing with ICA512-TMF and displacing SNTB2. ICA512-CCF translocated to the nucleus promotes expression of insulin and other granule-related genes; the function implicates binding to and regulating activity of STAT5B probably by preventing its dephosphorylation and potentially by inducing its sumoylation by recruiting PIAS4. Enhances pancreatic beta-cell proliferation by converging with signaling by STAT5B and STAT3. ICA512-CCF located in the cytoplasm regulates dynamics and exocytosis of insulin secretory granules (SGs) by dimerizing with ICA512-TMF and displacing SNTB2 thus enhancing SGs mobility and exocytosis. This is Receptor-type tyrosine-protein phosphatase-like N (Ptprn) from Mus musculus (Mouse).